The primary structure comprises 334 residues: Fe-S cluster assembly protein DRE2 (334 aa).

The segment at 1 to 131 is N-terminal SAM-like domain; sequence MASTKTGLVL…ASIKAEPVAV (131 aa). The segment at 132–228 is linker; the sequence is PLRNHKKTTT…EDELVDENEM (97 aa). The interval 135–229 is disordered; sequence NHKKTTTPGT…DELVDENEMR (95 aa). Positions 140 to 150 are enriched in low complexity; sequence TTPGTTTTAKK. Acidic residues-rich tracts occupy residues 182–192 and 215–227; these read DSEDEDEESEG and DSIE…DENE. [2Fe-2S] cluster-binding residues include cysteine 238, cysteine 249, cysteine 252, and cysteine 254. A fe-S binding site A region spans residues 238-254; that stretch reads CGKSKTRRRKACKDCTC. Cysteine 297, cysteine 300, cysteine 308, and cysteine 311 together coordinate [4Fe-4S] cluster. 2 short sequence motifs (cx2C motif) span residues 297 to 300 and 308 to 311; these read CGSC and CSGC. The tract at residues 297-311 is fe-S binding site B; the sequence is CGSCTLGDAFRCSGC.

It belongs to the anamorsin family. As to quaternary structure, monomer. Interacts with TAH18. Interacts with MIA40. It depends on [2Fe-2S] cluster as a cofactor. Requires [4Fe-4S] cluster as cofactor.

Its subcellular location is the cytoplasm. The protein localises to the mitochondrion intermembrane space. Its function is as follows. Component of the cytosolic iron-sulfur (Fe-S) protein assembly (CIA) machinery required for the maturation of extramitochondrial Fe-S proteins. Part of an electron transfer chain functioning in an early step of cytosolic Fe-S biogenesis, facilitating the de novo assembly of a [4Fe-4S] cluster on the scaffold complex CFD1-NBP35. Electrons are transferred to DRE2 from NADPH via the FAD- and FMN-containing protein TAH18. TAH18-DRE2 are also required for the assembly of the diferric tyrosyl radical cofactor of ribonucleotide reductase (RNR), probably by providing electrons for reduction during radical cofactor maturation in the catalytic small subunit RNR2. This is Fe-S cluster assembly protein DRE2 from Zygosaccharomyces rouxii (strain ATCC 2623 / CBS 732 / NBRC 1130 / NCYC 568 / NRRL Y-229).